Consider the following 187-residue polypeptide: Putative manganese efflux pump MntP (187 aa).

6 consecutive transmembrane segments (helical) span residues 3–23 (FYSLIFLSCALGMDAFAVSLC), 35–55 (HYLIVGIYFGGFQALMPTIGY), 56–76 (FIGITFASFIASIDHWIAFIL), 107–127 (LALAIATSIDALAVGVSFAFL), 129–149 (VNLLLAIFLIGIITFILCIIA), and 166–186 (LLGGLVLIILGVKILIEHLFF).

It belongs to the MntP (TC 9.B.29) family.

It localises to the cell inner membrane. Its function is as follows. Probably functions as a manganese efflux pump. This chain is Putative manganese efflux pump MntP, found in Campylobacter jejuni (strain RM1221).